Reading from the N-terminus, the 156-residue chain is Large ribosomal subunit protein bL9 (156 aa).

Belongs to the bacterial ribosomal protein bL9 family.

Its function is as follows. Binds to the 23S rRNA. The sequence is that of Large ribosomal subunit protein bL9 from Treponema pallidum (strain Nichols).